Here is a 146-residue protein sequence, read N- to C-terminus: Deoxyuridine 5'-triphosphate nucleotidohydrolase (146 aa).

Residues 60–62, Asn-73, and 77–79 each bind substrate; these read RSG and VID.

It belongs to the dUTPase family. Requires Mg(2+) as cofactor.

The catalysed reaction is dUTP + H2O = dUMP + diphosphate + H(+). It functions in the pathway pyrimidine metabolism; dUMP biosynthesis; dUMP from dCTP (dUTP route): step 2/2. In terms of biological role, this enzyme is involved in nucleotide metabolism: it produces dUMP, the immediate precursor of thymidine nucleotides and it decreases the intracellular concentration of dUTP so that uracil cannot be incorporated into DNA. The polypeptide is Deoxyuridine 5'-triphosphate nucleotidohydrolase (Tropheryma whipplei (strain TW08/27) (Whipple's bacillus)).